We begin with the raw amino-acid sequence, 163 residues long: Peptide methionine sulfoxide reductase MsrA (163 aa).

C10 is an active-site residue.

The protein belongs to the MsrA Met sulfoxide reductase family.

The enzyme catalyses L-methionyl-[protein] + [thioredoxin]-disulfide + H2O = L-methionyl-(S)-S-oxide-[protein] + [thioredoxin]-dithiol. It carries out the reaction [thioredoxin]-disulfide + L-methionine + H2O = L-methionine (S)-S-oxide + [thioredoxin]-dithiol. Its function is as follows. Has an important function as a repair enzyme for proteins that have been inactivated by oxidation. Catalyzes the reversible oxidation-reduction of methionine sulfoxide in proteins to methionine. This Ruthia magnifica subsp. Calyptogena magnifica protein is Peptide methionine sulfoxide reductase MsrA.